The following is a 316-amino-acid chain: Nucleotide-binding protein NFA_35930 (316 aa).

32 to 39 serves as a coordination point for ATP; the sequence is GLSGAGRG. 83–86 serves as a coordination point for GTP; that stretch reads DVRS.

This sequence belongs to the RapZ-like family.

In terms of biological role, displays ATPase and GTPase activities. The sequence is that of Nucleotide-binding protein NFA_35930 from Nocardia farcinica (strain IFM 10152).